The following is an 833-amino-acid chain: Leucine--tRNA ligase (833 aa).

Residues 41 to 52 carry the 'HIGH' region motif; it reads PYPSGAGLHVGH. The 'KMSKS' region motif lies at 610–614; the sequence is KMSKS. Lys613 is a binding site for ATP.

It belongs to the class-I aminoacyl-tRNA synthetase family.

It is found in the cytoplasm. It carries out the reaction tRNA(Leu) + L-leucine + ATP = L-leucyl-tRNA(Leu) + AMP + diphosphate. The chain is Leucine--tRNA ligase from Streptococcus pyogenes serotype M5 (strain Manfredo).